The following is a 275-amino-acid chain: Hydroxyethylthiazole kinase (275 aa).

Met50 serves as a coordination point for substrate. The ATP site is built by Arg126 and Ser171. A substrate-binding site is contributed by Ala200.

The protein belongs to the Thz kinase family. It depends on Mg(2+) as a cofactor.

The enzyme catalyses 5-(2-hydroxyethyl)-4-methylthiazole + ATP = 4-methyl-5-(2-phosphooxyethyl)-thiazole + ADP + H(+). The protein operates within cofactor biosynthesis; thiamine diphosphate biosynthesis; 4-methyl-5-(2-phosphoethyl)-thiazole from 5-(2-hydroxyethyl)-4-methylthiazole: step 1/1. Catalyzes the phosphorylation of the hydroxyl group of 4-methyl-5-beta-hydroxyethylthiazole (THZ). The polypeptide is Hydroxyethylthiazole kinase (Acinetobacter baumannii (strain ACICU)).